The following is a 116-amino-acid chain: Small ribosomal subunit protein bS16 (116 aa).

The protein belongs to the bacterial ribosomal protein bS16 family.

The polypeptide is Small ribosomal subunit protein bS16 (Chlamydia trachomatis serovar A (strain ATCC VR-571B / DSM 19440 / HAR-13)).